The chain runs to 669 residues: Probable ferric reductase transmembrane component (669 aa).

Residues 17 to 86 (FKTNGTEYAK…SGKGNSGTST (70 aa)) are disordered. N-linked (GlcNAc...) asparagine glycans are attached at residues N20, N52, N64, and N116. Residues 28 to 86 (TTKSSSGSKTSTSASKSSKSTGSSNASKSSTNAHGSNSSTSSTSSSSSKSGKGNSGTST) show a composition bias toward low complexity. Residues 122 to 142 (GSGLLGYWAGILAIAIFANMI) traverse the membrane as a helical segment. A glycan (N-linked (GlcNAc...) asparagine) is linked at N152. 5 helical membrane passes run 198–218 (IIVVIFVVLTGLFSALHIHHV), 234–254 (LIADRTGILGTFLIPLLILFG), 281–301 (VDVLLIIVHAITFSVSDKATG), 313–333 (IWGTVSTICGGFILFQAMLFF), and 340–360 (VFFLIHIVLVVFFVVGGYYHL). Positions 239-373 (TGILGTFLIP…GYGDFMWAAI (135 aa)) constitute a Ferric oxidoreductase domain. The FAD-binding FR-type domain occupies 374-492 (AVWAFDRVVR…EGPYGEPSSA (119 aa)). Residue 437–442 (HPFTFT) participates in FAD binding. A helical transmembrane segment spans residues 499–519 (VVFVAGGNGIPGIYSECVDLA). N-linked (GlcNAc...) asparagine glycans are attached at residues N524 and N653.

The protein belongs to the ferric reductase (FRE) family. The cofactor is FAD.

It localises to the membrane. The enzyme catalyses 2 a Fe(II)-siderophore + NAD(+) + H(+) = 2 a Fe(III)-siderophore + NADH. The chain is Probable ferric reductase transmembrane component (CFL1) from Candida albicans (Yeast).